We begin with the raw amino-acid sequence, 220 residues long: Guanylate kinase (220 aa).

Residues 15-194 enclose the Guanylate kinase-like domain; that stretch reads GLMLVISSPS…AFDAVQSIVK (180 aa). Position 22–29 (22–29) interacts with ATP; it reads SPSGAGKS.

Belongs to the guanylate kinase family.

It localises to the cytoplasm. It catalyses the reaction GMP + ATP = GDP + ADP. Its function is as follows. Essential for recycling GMP and indirectly, cGMP. In Rhizobium etli (strain ATCC 51251 / DSM 11541 / JCM 21823 / NBRC 15573 / CFN 42), this protein is Guanylate kinase.